A 181-amino-acid chain; its full sequence is NAD(P)H-quinone oxidoreductase subunit I, chloroplastic (181 aa).

4Fe-4S ferredoxin-type domains lie at 52 to 81 (GRIHFEFDKCIACEVCVRVCPINLPVVDWE) and 92 to 121 (KSYSIDFGVCIFCGNCVEFCPTNCLSMTEE). The [4Fe-4S] cluster site is built by Cys61, Cys64, Cys67, Cys71, Cys101, Cys104, Cys107, and Cys111.

Belongs to the complex I 23 kDa subunit family. In terms of assembly, NDH is composed of at least 16 different subunits, 5 of which are encoded in the nucleus. It depends on [4Fe-4S] cluster as a cofactor.

The protein localises to the plastid. It localises to the chloroplast thylakoid membrane. The enzyme catalyses a plastoquinone + NADH + (n+1) H(+)(in) = a plastoquinol + NAD(+) + n H(+)(out). The catalysed reaction is a plastoquinone + NADPH + (n+1) H(+)(in) = a plastoquinol + NADP(+) + n H(+)(out). Functionally, NDH shuttles electrons from NAD(P)H:plastoquinone, via FMN and iron-sulfur (Fe-S) centers, to quinones in the photosynthetic chain and possibly in a chloroplast respiratory chain. The immediate electron acceptor for the enzyme in this species is believed to be plastoquinone. Couples the redox reaction to proton translocation, and thus conserves the redox energy in a proton gradient. The polypeptide is NAD(P)H-quinone oxidoreductase subunit I, chloroplastic (Staurastrum punctulatum (Green alga)).